We begin with the raw amino-acid sequence, 163 residues long: ATP synthase subunit b (163 aa).

The chain crosses the membrane as a helical span at residues 9–29; that stretch reads GLLIAQLINVVFVVWLLTTFL.

The protein belongs to the ATPase B chain family. As to quaternary structure, F-type ATPases have 2 components, F(1) - the catalytic core - and F(0) - the membrane proton channel. F(1) has five subunits: alpha(3), beta(3), gamma(1), delta(1), epsilon(1). F(0) has four main subunits: a(1), b(2) and c(10-14). The alpha and beta chains form an alternating ring which encloses part of the gamma chain. F(1) is attached to F(0) by a central stalk formed by the gamma and epsilon chains, while a peripheral stalk is formed by the delta and b chains.

Its subcellular location is the cell membrane. F(1)F(0) ATP synthase produces ATP from ADP in the presence of a proton or sodium gradient. F-type ATPases consist of two structural domains, F(1) containing the extramembraneous catalytic core and F(0) containing the membrane proton channel, linked together by a central stalk and a peripheral stalk. During catalysis, ATP synthesis in the catalytic domain of F(1) is coupled via a rotary mechanism of the central stalk subunits to proton translocation. Its function is as follows. Component of the F(0) channel, it forms part of the peripheral stalk, linking F(1) to F(0). In Roseiflexus castenholzii (strain DSM 13941 / HLO8), this protein is ATP synthase subunit b.